A 406-amino-acid polypeptide reads, in one-letter code: Peptidase T (406 aa).

Histidine 82 is a Zn(2+) binding site. The active site involves aspartate 84. Position 142 (aspartate 142) interacts with Zn(2+). Glutamate 176 acts as the Proton acceptor in catalysis. 3 residues coordinate Zn(2+): glutamate 177, aspartate 199, and histidine 381.

Belongs to the peptidase M20B family. Zn(2+) is required as a cofactor.

The protein resides in the cytoplasm. The catalysed reaction is Release of the N-terminal residue from a tripeptide.. Functionally, cleaves the N-terminal amino acid of tripeptides. The protein is Peptidase T of Streptococcus agalactiae serotype V (strain ATCC BAA-611 / 2603 V/R).